The sequence spans 378 residues: Chaperone protein DnaJ (378 aa).

The J domain maps to 5–70; it reads DYYEVLGVAK…QKRAAYDQYG (66 aa). The segment at 138 to 216 adopts a CR-type zinc-finger fold; that stretch reads GYDTQIRVPS…CHGSGKVKET (79 aa). Zn(2+)-binding residues include cysteine 151, cysteine 154, cysteine 168, cysteine 171, cysteine 190, cysteine 193, cysteine 204, and cysteine 207. CXXCXGXG motif repeat units lie at residues 151-158, 168-175, 190-197, and 204-211; these read CEVCHGSG, CPTCHGQG, CPKCHGTG, and CVHCHGSG.

Belongs to the DnaJ family. As to quaternary structure, homodimer. It depends on Zn(2+) as a cofactor.

It localises to the cytoplasm. Functionally, participates actively in the response to hyperosmotic and heat shock by preventing the aggregation of stress-denatured proteins and by disaggregating proteins, also in an autonomous, DnaK-independent fashion. Unfolded proteins bind initially to DnaJ; upon interaction with the DnaJ-bound protein, DnaK hydrolyzes its bound ATP, resulting in the formation of a stable complex. GrpE releases ADP from DnaK; ATP binding to DnaK triggers the release of the substrate protein, thus completing the reaction cycle. Several rounds of ATP-dependent interactions between DnaJ, DnaK and GrpE are required for fully efficient folding. Also involved, together with DnaK and GrpE, in the DNA replication of plasmids through activation of initiation proteins. In Burkholderia lata (strain ATCC 17760 / DSM 23089 / LMG 22485 / NCIMB 9086 / R18194 / 383), this protein is Chaperone protein DnaJ.